The following is a 747-amino-acid chain: RNA polymerase II assembly factor rtp1 (747 aa).

7 HEAT repeats span residues 37–75, 103–141, 320–358, 381–418, 459–485, 486–523, and 557–594; these read NYFLNLLEEISKLDTDQPLSVTSLRCLQLFVHLTFLLGV, QIYNILLPLLLTPSLLQGPLNLHYADLLLLHLYLLNCHE, DIIRICESCVPSLLHLQENTTLRSKVQDILLRIISVCGT, SQLAMFLPNLLEIWVQQPPDKRLELLELVQYALSNVDS, EENEEILLVLLNIISSVIGRNAELDLE, NPISSLLPALEQLSNYSNREISDLAKDVYKTLIQSKDD, and INPVRVLHVLINLLRDENSYVHLNVISAVVSLCDKYDD.

This sequence belongs to the Tango6 family. As to quaternary structure, interacts with RNA polymerase II subunits. Interacts with nuclear pore complex subunits.

It localises to the cytoplasm. Its subcellular location is the nucleus. Its function is as follows. Required for the cytoplasmic assembly and the nuclear import of RNA polymerase II. The sequence is that of RNA polymerase II assembly factor rtp1 from Schizosaccharomyces pombe (strain 972 / ATCC 24843) (Fission yeast).